We begin with the raw amino-acid sequence, 120 residues long: MANPHQIYRHDAAWDRQVFRSLATSLILHGHIKTTLDRAKRLRSVVEKLITKAKKNDLAARRQILSFLYGLKTRDGVKVMPYLFNKVAPRYQERNGGYTRIVRIPSRLGDNSKMAIIELV.

Belongs to the bacterial ribosomal protein bL17 family. In terms of assembly, part of the 50S ribosomal subunit. Contacts protein L32.

This chain is Large ribosomal subunit protein bL17, found in Mesomycoplasma hyopneumoniae (strain J / ATCC 25934 / NCTC 10110) (Mycoplasma hyopneumoniae).